A 289-amino-acid polypeptide reads, in one-letter code: Shikimate dehydrogenase (NADP(+)) (289 aa).

Residues 22–24 and Thr69 contribute to the shikimate site; that span reads SRS. The Proton acceptor role is filled by Lys73. Residue Glu85 participates in NADP(+) binding. Residues Asn94 and Asp109 each contribute to the shikimate site. Residues 134–138, 158–163, and Ile226 each bind NADP(+); these read GAGGA and NRTLSR. A shikimate-binding site is contributed by Tyr228. Gly249 is a binding site for NADP(+).

It belongs to the shikimate dehydrogenase family. As to quaternary structure, homodimer.

It carries out the reaction shikimate + NADP(+) = 3-dehydroshikimate + NADPH + H(+). Its pathway is metabolic intermediate biosynthesis; chorismate biosynthesis; chorismate from D-erythrose 4-phosphate and phosphoenolpyruvate: step 4/7. Its function is as follows. Involved in the biosynthesis of the chorismate, which leads to the biosynthesis of aromatic amino acids. Catalyzes the reversible NADPH linked reduction of 3-dehydroshikimate (DHSA) to yield shikimate (SA). The polypeptide is Shikimate dehydrogenase (NADP(+)) (Brucella canis (strain ATCC 23365 / NCTC 10854 / RM-666)).